The sequence spans 465 residues: Citrate synthase-like protein (465 aa).

A disordered region spans residues 13 to 40 (HISDMVDSTKMNGNQSQDTAGRADTPVS). The segment covering 21-31 (TKMNGNQSQDT) has biased composition (polar residues). Catalysis depends on residues histidine 357 and aspartate 413.

This sequence belongs to the citrate synthase family.

It functions in the pathway secondary metabolite biosynthesis. Functionally, citrate synthase-like protein; part of the gene cluster that mediates the biosynthesis of squalestatin S1 (SQS1, also known as zaragozic acid A), a heavily oxidized fungal polyketide that offers potent cholesterol lowering activity by targeting squalene synthase (SS). SQS1 is composed of a 2,8-dioxobicyclic[3.2.1]octane-3,4,5-tricarboxyclic acid core that is connected to two lipophilic polyketide arms. These initial steps feature the priming of an unusual benzoic acid starter unit onto the highly reducing polyketide synthase pks2, followed by oxaloacetate extension and product release to generate a tricarboxylic acid containing product. The phenylalanine ammonia lyase (PAL) M7 and the acyl-CoA ligase M9 are involved in transforming phenylalanine into benzoyl-CoA. The citrate synthase-like protein R3 is involved in connecting the C-alpha-carbons of the hexaketide chain and oxaloacetate to afford the tricarboxylic acid unit. The potential hydrolytic enzymes, M8 and M10, are in close proximity to pks2 and may participate in product release. On the other side, the tetraketide arm is synthesized by a the squalestatin tetraketide synthase pks1 and enzymatically esterified to the core in the last biosynthetic step, by the acetyltransferase M4. The biosynthesis of the tetraketide must involve 3 rounds of chain extension. After the first and second rounds methyl-transfer occurs, and in all rounds of extension the ketoreductase and dehydratase are active. The enoyl reductase and C-MeT of pks1 are not active in the final round of extension. The acetyltransferase M4 appears to have a broad substrate selectivity for its acyl CoA substrate, allowing the in vitro synthesis of novel squalestatins. The biosynthesis of SQS1 requires several oxidative steps likely performed by oxidoreductases M1, R1 and R2. Finally, in support of the identification of the cluster as being responsible for SQS1 production, the cluster contains a gene encoding a putative squalene synthase (SS) R6, suggesting a likely mechanism for self-resistance. The sequence is that of Citrate synthase-like protein from Phoma sp. (strain ATCC 20986 / MF5453).